Reading from the N-terminus, the 572-residue chain is Phenylalanine--tRNA ligase beta subunit (572 aa).

Residues 285-363 (LSTTTKTVSH…RAFGFNELEP (79 aa)) enclose the B5 domain. Mg(2+) is bound by residues D341, D347, D350, and D351.

The protein belongs to the phenylalanyl-tRNA synthetase beta subunit family. Type 2 subfamily. In terms of assembly, tetramer of two alpha and two beta subunits. Mg(2+) is required as a cofactor.

Its subcellular location is the cytoplasm. The catalysed reaction is tRNA(Phe) + L-phenylalanine + ATP = L-phenylalanyl-tRNA(Phe) + AMP + diphosphate + H(+). This chain is Phenylalanine--tRNA ligase beta subunit, found in Natronomonas pharaonis (strain ATCC 35678 / DSM 2160 / CIP 103997 / JCM 8858 / NBRC 14720 / NCIMB 2260 / Gabara) (Halobacterium pharaonis).